Here is a 133-residue protein sequence, read N- to C-terminus: Major seminal plasma glycoprotein PSP-I (133 aa).

Positions Met1 to Gly24 are cleaved as a signal peptide. A disulfide bond links Cys30 and Cys51. The region spanning Cys30–Asp130 is the CUB domain. An N-linked (GlcNAc...) (complex) asparagine glycan is attached at Asn71. Residues Cys74 and Cys95 are joined by a disulfide bond.

In terms of assembly, monomer or heterodimer with PSP-II (depending on the type of glycosylation of PSP-I). In terms of tissue distribution, seminal plasma or sperm.

Its subcellular location is the secreted. Not yet identified, major porcine seminal plasma protein. Can bind soybean trypsin inhibitor after deglycosylation. In Sus scrofa (Pig), this protein is Major seminal plasma glycoprotein PSP-I.